The chain runs to 168 residues: Thiol peroxidase (168 aa).

In terms of domain architecture, Thioredoxin spans 19–168 (PQAGSKAQAF…YDAALNVLKA (150 aa)). Cys-61 (cysteine sulfenic acid (-SOH) intermediate) is an active-site residue. A disulfide bridge links Cys-61 with Cys-95.

The protein belongs to the peroxiredoxin family. Tpx subfamily. As to quaternary structure, homodimer.

It catalyses the reaction a hydroperoxide + [thioredoxin]-dithiol = an alcohol + [thioredoxin]-disulfide + H2O. Functionally, thiol-specific peroxidase that catalyzes the reduction of hydrogen peroxide and organic hydroperoxides to water and alcohols, respectively. Plays a role in cell protection against oxidative stress by detoxifying peroxides. This chain is Thiol peroxidase, found in Salmonella typhimurium (strain LT2 / SGSC1412 / ATCC 700720).